A 208-amino-acid chain; its full sequence is FMN-dependent NADH:quinone oxidoreductase (208 aa).

Residues 17–19, 99–102, and 143–146 each bind FMN; these read SNS, MWNL, and SRGG.

It belongs to the azoreductase type 1 family. Homodimer. FMN serves as cofactor.

The enzyme catalyses 2 a quinone + NADH + H(+) = 2 a 1,4-benzosemiquinone + NAD(+). The catalysed reaction is N,N-dimethyl-1,4-phenylenediamine + anthranilate + 2 NAD(+) = 2-(4-dimethylaminophenyl)diazenylbenzoate + 2 NADH + 2 H(+). Its function is as follows. Quinone reductase that provides resistance to thiol-specific stress caused by electrophilic quinones. Functionally, also exhibits azoreductase activity. Catalyzes the reductive cleavage of the azo bond in aromatic azo compounds to the corresponding amines. The sequence is that of FMN-dependent NADH:quinone oxidoreductase from Staphylococcus carnosus (strain TM300).